The primary structure comprises 466 residues: 3-isopropylmalate dehydratase large subunit (466 aa).

[4Fe-4S] cluster contacts are provided by Cys-346, Cys-406, and Cys-409.

This sequence belongs to the aconitase/IPM isomerase family. LeuC type 1 subfamily. Heterodimer of LeuC and LeuD. It depends on [4Fe-4S] cluster as a cofactor.

It carries out the reaction (2R,3S)-3-isopropylmalate = (2S)-2-isopropylmalate. It participates in amino-acid biosynthesis; L-leucine biosynthesis; L-leucine from 3-methyl-2-oxobutanoate: step 2/4. Functionally, catalyzes the isomerization between 2-isopropylmalate and 3-isopropylmalate, via the formation of 2-isopropylmaleate. This chain is 3-isopropylmalate dehydratase large subunit, found in Alteromonas mediterranea (strain DSM 17117 / CIP 110805 / LMG 28347 / Deep ecotype).